The sequence spans 267 residues: uncharacterized protein (267 aa).

A helical membrane pass occupies residues 30–52; the sequence is FMRIFLLFLFFVLFTFGVEGYVI.

The protein localises to the membrane. This is an uncharacterized protein from Aquifex aeolicus (strain VF5).